The primary structure comprises 263 residues: Small ribosomal subunit protein uS2 (263 aa).

The residue at position 2 (Ser-2) is an N-acetylserine. The segment covering Asn-213–Thr-223 has biased composition (low complexity). The interval Asn-213 to Asp-245 is disordered. A compositionally biased stretch (acidic residues) spans Glu-224–Asp-245.

This sequence belongs to the universal ribosomal protein uS2 family. As to quaternary structure, component of the small ribosomal subunit. Mature ribosomes consist of a small (40S) and a large (60S) subunit. The 40S subunit contains about 33 different proteins and 1 molecule of RNA (18S). The 60S subunit contains about 49 different proteins and 3 molecules of RNA (25S, 5.8S and 5S). Interacts with RPS21.

The protein localises to the cytoplasm. Its function is as follows. Required for the assembly and/or stability of the 40S ribosomal subunit. Required for the processing of the 20S rRNA-precursor to mature 18S rRNA in a late step of the maturation of 40S ribosomal subunits. This is Small ribosomal subunit protein uS2 from Clavispora lusitaniae (strain ATCC 42720) (Yeast).